The sequence spans 500 residues: L-arabinose isomerase (500 aa).

The Mn(2+) site is built by Glu-306, Glu-333, His-350, and His-450.

Belongs to the arabinose isomerase family. In terms of assembly, homohexamer. It depends on Mn(2+) as a cofactor.

The catalysed reaction is beta-L-arabinopyranose = L-ribulose. It participates in carbohydrate degradation; L-arabinose degradation via L-ribulose; D-xylulose 5-phosphate from L-arabinose (bacterial route): step 1/3. Its function is as follows. Catalyzes the conversion of L-arabinose to L-ribulose. The protein is L-arabinose isomerase of Yersinia pestis bv. Antiqua (strain Nepal516).